Reading from the N-terminus, the 274-residue chain is Large ribosomal subunit protein uL2cz/uL2cy (274 aa).

The interval 224-274 is disordered; sequence NPVDHPHGGGEGRAPIGRKKPTTPWGYPALGRRSRKRNKYSDNLILRRRSK.

This sequence belongs to the universal ribosomal protein uL2 family. As to quaternary structure, part of the 50S ribosomal subunit.

The protein localises to the plastid. Its subcellular location is the chloroplast. This chain is Large ribosomal subunit protein uL2cz/uL2cy (rpl2-A), found in Panax ginseng (Korean ginseng).